Here is a 630-residue protein sequence, read N- to C-terminus: 1-deoxy-D-xylulose-5-phosphate synthase (630 aa).

Thiamine diphosphate contacts are provided by residues His-72 and 113-115; that span reads GHS. Asp-144 is a Mg(2+) binding site. Thiamine diphosphate contacts are provided by residues 145–146, Asn-173, Tyr-284, and Glu-367; that span reads GA. Residue Asn-173 participates in Mg(2+) binding.

The protein belongs to the transketolase family. DXPS subfamily. Homodimer. Mg(2+) serves as cofactor. The cofactor is thiamine diphosphate.

The catalysed reaction is D-glyceraldehyde 3-phosphate + pyruvate + H(+) = 1-deoxy-D-xylulose 5-phosphate + CO2. Its pathway is metabolic intermediate biosynthesis; 1-deoxy-D-xylulose 5-phosphate biosynthesis; 1-deoxy-D-xylulose 5-phosphate from D-glyceraldehyde 3-phosphate and pyruvate: step 1/1. Functionally, catalyzes the acyloin condensation reaction between C atoms 2 and 3 of pyruvate and glyceraldehyde 3-phosphate to yield 1-deoxy-D-xylulose-5-phosphate (DXP). This Bacillus cereus (strain B4264) protein is 1-deoxy-D-xylulose-5-phosphate synthase.